Here is a 68-residue protein sequence, read N- to C-terminus: MMSKLGVLLTICLLLFPLTAVRLDGDQHTDRPADRMQDIATEQHPLFDPVKRCCDWPCTIGCVPCCLP.

The N-terminal stretch at 1 to 20 (MMSKLGVLLTICLLLFPLTA) is a signal peptide. Residues 21-52 (VRLDGDQHTDRPADRMQDIATEQHPLFDPVKR) constitute a propeptide that is removed on maturation. 3 disulfide bridges follow: Cys-53–Cys-66, Cys-54–Cys-62, and Cys-58–Cys-65. Pro-64 carries the post-translational modification 4-hydroxyproline.

Belongs to the conotoxin M superfamily. As to expression, expressed by the venom duct.

It localises to the secreted. This chain is Conotoxin TsMMSK-021, found in Conus tessulatus (Tessellate cone).